A 138-amino-acid polypeptide reads, in one-letter code: Putative pre-16S rRNA nuclease (138 aa).

This sequence belongs to the YqgF nuclease family.

The protein localises to the cytoplasm. Its function is as follows. Could be a nuclease involved in processing of the 5'-end of pre-16S rRNA. This is Putative pre-16S rRNA nuclease from Bacillus pumilus (strain SAFR-032).